Consider the following 224-residue polypeptide: Large ribosomal subunit protein bL25 (224 aa).

Residues V196–E224 are disordered. Residues E197–A208 show a composition bias toward acidic residues.

It belongs to the bacterial ribosomal protein bL25 family. CTC subfamily. As to quaternary structure, part of the 50S ribosomal subunit; part of the 5S rRNA/L5/L18/L25 subcomplex. Contacts the 5S rRNA. Binds to the 5S rRNA independently of L5 and L18.

This is one of the proteins that binds to the 5S RNA in the ribosome where it forms part of the central protuberance. This chain is Large ribosomal subunit protein bL25, found in Psychrobacter sp. (strain PRwf-1).